The chain runs to 176 residues: Large ribosomal subunit protein eL6A (176 aa).

Ser-2 is modified (N-acetylserine). Ser-12 is subject to Phosphoserine. Lys-128 participates in a covalent cross-link: Glycyl lysine isopeptide (Lys-Gly) (interchain with G-Cter in ubiquitin).

It belongs to the eukaryotic ribosomal protein eL6 family. Component of the large ribosomal subunit (LSU). Mature yeast ribosomes consist of a small (40S) and a large (60S) subunit. The 40S small subunit contains 1 molecule of ribosomal RNA (18S rRNA) and 33 different proteins (encoded by 57 genes). The large 60S subunit contains 3 rRNA molecules (25S, 5.8S and 5S rRNA) and 46 different proteins (encoded by 81 genes). In terms of processing, N-terminally acetylated by acetyltransferase NatA.

It is found in the cytoplasm. Component of the ribosome, a large ribonucleoprotein complex responsible for the synthesis of proteins in the cell. The small ribosomal subunit (SSU) binds messenger RNAs (mRNAs) and translates the encoded message by selecting cognate aminoacyl-transfer RNA (tRNA) molecules. The large subunit (LSU) contains the ribosomal catalytic site termed the peptidyl transferase center (PTC), which catalyzes the formation of peptide bonds, thereby polymerizing the amino acids delivered by tRNAs into a polypeptide chain. The nascent polypeptides leave the ribosome through a tunnel in the LSU and interact with protein factors that function in enzymatic processing, targeting, and the membrane insertion of nascent chains at the exit of the ribosomal tunnel. The sequence is that of Large ribosomal subunit protein eL6A from Saccharomyces cerevisiae (strain ATCC 204508 / S288c) (Baker's yeast).